The following is a 359-amino-acid chain: Chaperone protein DnaJ (359 aa).

One can recognise a J domain in the interval 3–68 (DYYEILGVPK…ERRQTYDRYG (66 aa)). Residues 128 to 205 (GVSKDIKYKI…CAGKGFIEEQ (78 aa)) form a CR-type zinc finger. Positions 141, 144, 157, 160, 179, 182, 193, and 196 each coordinate Zn(2+). CXXCXGXG motif repeat units lie at residues 141-148 (CKTCDGTG), 157-164 (CPYCGGSG), 179-186 (CPFCKGSG), and 193-200 (CHDCAGKG).

The protein belongs to the DnaJ family. As to quaternary structure, homodimer. Zn(2+) serves as cofactor.

It is found in the cytoplasm. Its function is as follows. Participates actively in the response to hyperosmotic and heat shock by preventing the aggregation of stress-denatured proteins and by disaggregating proteins, also in an autonomous, DnaK-independent fashion. Unfolded proteins bind initially to DnaJ; upon interaction with the DnaJ-bound protein, DnaK hydrolyzes its bound ATP, resulting in the formation of a stable complex. GrpE releases ADP from DnaK; ATP binding to DnaK triggers the release of the substrate protein, thus completing the reaction cycle. Several rounds of ATP-dependent interactions between DnaJ, DnaK and GrpE are required for fully efficient folding. Also involved, together with DnaK and GrpE, in the DNA replication of plasmids through activation of initiation proteins. This chain is Chaperone protein DnaJ, found in Campylobacter hominis (strain ATCC BAA-381 / DSM 21671 / CCUG 45161 / LMG 19568 / NCTC 13146 / CH001A).